The following is a 587-amino-acid chain: Phosphomethylpyrimidine synthase (587 aa).

Substrate-binding positions include N218, M247, Y276, H312, 332-334 (SRG), 373-376 (DGLR), and E412. H416 contributes to the Zn(2+) binding site. A substrate-binding site is contributed by Y439. H480 is a binding site for Zn(2+). Residues C560, C563, and C568 each contribute to the [4Fe-4S] cluster site.

This sequence belongs to the ThiC family. [4Fe-4S] cluster serves as cofactor.

The catalysed reaction is 5-amino-1-(5-phospho-beta-D-ribosyl)imidazole + S-adenosyl-L-methionine = 4-amino-2-methyl-5-(phosphooxymethyl)pyrimidine + CO + 5'-deoxyadenosine + formate + L-methionine + 3 H(+). It functions in the pathway cofactor biosynthesis; thiamine diphosphate biosynthesis. In terms of biological role, catalyzes the synthesis of the hydroxymethylpyrimidine phosphate (HMP-P) moiety of thiamine from aminoimidazole ribotide (AIR) in a radical S-adenosyl-L-methionine (SAM)-dependent reaction. In Porphyromonas gingivalis (strain ATCC 33277 / DSM 20709 / CIP 103683 / JCM 12257 / NCTC 11834 / 2561), this protein is Phosphomethylpyrimidine synthase.